Consider the following 122-residue polypeptide: Biogenesis of lysosome-related organelles complex 1 subunit CNL1 (122 aa).

Residues 1–10 (MQDNSSHSRE) are compositionally biased toward basic and acidic residues. The segment at 1-21 (MQDNSSHSRESASAGDDPLGI) is disordered. Residues 63–95 (ENTIDKNIAKFKELLEKCDTLENHYEMLNQLAI) are a coiled coil.

It belongs to the BLOC1S4 family. Component of the biogenesis of lysosome-related organelles complex-1 (BLOC-1) composed of at least BLI1, BLS1, CNL1, KXD1, SNN1 and VAB2.

The protein localises to the cytoplasm. In terms of biological role, component of the biogenesis of lysosome-related organelles complex-1 (BLOC-1), a complex that is involved in endosomal cargo sorting. The chain is Biogenesis of lysosome-related organelles complex 1 subunit CNL1 (CLN1) from Saccharomyces cerevisiae (strain Lalvin QA23) (Baker's yeast).